The primary structure comprises 170 residues: Adenine phosphoribosyltransferase (170 aa).

Belongs to the purine/pyrimidine phosphoribosyltransferase family. As to quaternary structure, homodimer.

It localises to the cytoplasm. The enzyme catalyses AMP + diphosphate = 5-phospho-alpha-D-ribose 1-diphosphate + adenine. Its pathway is purine metabolism; AMP biosynthesis via salvage pathway; AMP from adenine: step 1/1. In terms of biological role, catalyzes a salvage reaction resulting in the formation of AMP, that is energically less costly than de novo synthesis. The polypeptide is Adenine phosphoribosyltransferase (Clostridioides difficile (strain 630) (Peptoclostridium difficile)).